The primary structure comprises 405 residues: Cytochrome P450 109 (405 aa).

Position 351 (C351) interacts with heme.

This sequence belongs to the cytochrome P450 family. Heme is required as a cofactor.

Functionally, cytochromes P450 are a group of heme-thiolate monooxygenases. They oxidize a variety of structurally unrelated compounds, including steroids, fatty acids, and xenobiotics. The protein is Cytochrome P450 109 (cyp109) of Bacillus spizizenii (strain ATCC 23059 / NRRL B-14472 / W23) (Bacillus subtilis subsp. spizizenii).